We begin with the raw amino-acid sequence, 258 residues long: Putative gamma-secretase subunit APH-1C (258 aa).

The next 7 membrane-spanning stretches (helical) occupy residues Val-5–Ile-25, Val-32–Phe-52, Leu-71–Tyr-91, Leu-116–Asn-136, Ala-161–Gly-181, Trp-187–Ser-207, and Leu-214–Gly-234.

This sequence belongs to the APH-1 family. As to quaternary structure, potential component of the gamma-secretase complex.

It localises to the membrane. In terms of biological role, potential subunit of the gamma-secretase complex, an endoprotease complex that catalyzes the intramembrane cleavage of integral proteins such as Notch receptors and APP (amyloid-beta precursor protein). The chain is Putative gamma-secretase subunit APH-1C (Aph1c) from Mus musculus (Mouse).